We begin with the raw amino-acid sequence, 747 residues long: Cyclic di-GMP phosphodiesterase PdeF (747 aa).

Over 1–14 the chain is Periplasmic; the sequence is MKLNATYIKIRDKW. A helical membrane pass occupies residues 15-36; it reads WGLPLFLPSLILPIFAHINTFA. The Cytoplasmic segment spans residues 37–42; the sequence is HISSGE. A helical membrane pass occupies residues 43-65; it reads VFLFYLPLALMISMMMFFSWAAL. The Periplasmic segment spans residues 66-79; sequence PGIALGIFVRKYAE. The helical transmembrane segment at 80–102 threads the bilayer; that stretch reads LGFYETLSLTANFIIIIILCWGG. At 103 to 128 the chain is on the cytoplasmic side; the sequence is YRVFTPRRNNVSHGDTRLISQRIFWQ. The chain crosses the membrane as a helical span at residues 129-151; sequence IVFPATLFLILFQFAAFVGLLAS. Topologically, residues 152–165 are periplasmic; sequence RENLVGVMPFNLGT. The chain crosses the membrane as a helical span at residues 166 to 188; the sequence is LINYQALLVGNLIGVPLCYFIIR. The Cytoplasmic segment spans residues 189 to 215; the sequence is VVRNPFYLRSYYSQLKQQVDAKVTKKE. The helical transmembrane segment at 216–235 threads the bilayer; sequence FALWLLALGALLLLLCMPLN. Topologically, residues 236–239 are periplasmic; it reads EKST. The helical transmembrane segment at 240-259 threads the bilayer; the sequence is IFSTNYTLSLLLPLMMWGAM. Residues 260-265 are Cytoplasmic-facing; sequence RYGYKL. A helical transmembrane segment spans residues 266–285; it reads ISLLWAVVLMISIHSYQNYI. Residues 286 to 294 are Periplasmic-facing; that stretch reads PIYPGYTTQ. A helical membrane pass occupies residues 295–317; that stretch reads LTITSSSYLVFSFIVNYMAVLAT. Residues 318–747 lie on the Cytoplasmic side of the membrane; the sequence is RQRAVVRRIQ…NEIEPIRESA (430 aa). The 252-residue stretch at 493–744 folds into the EAL domain; sequence KVAMMNRLQQ…DTLNEIEPIR (252 aa).

Mg(2+) serves as cofactor. It depends on Mn(2+) as a cofactor.

The protein localises to the cell inner membrane. It carries out the reaction 3',3'-c-di-GMP + H2O = 5'-phosphoguanylyl(3'-&gt;5')guanosine + H(+). Its activity is regulated as follows. Inhibited by pGpG. Phosphodiesterase (PDE) that catalyzes the hydrolysis of cyclic-di-GMP (c-di-GMP) to 5'-pGpG. Truncated proteins consisting of the GGDEF/EAL domains (residues 319-747) or of the EAL domain alone (481-747) have c-di-GMP phosphodiesterase activity. They do not have diguanylate cyclase activity. Cyclic-di-GMP is a second messenger which controls cell surface-associated traits in bacteria. The chain is Cyclic di-GMP phosphodiesterase PdeF from Escherichia coli (strain K12).